Consider the following 596-residue polypeptide: MKNIRNFAIIAHIDHGKSTLADRLMEECKAVDPRKMKEQLLDSMKIERERGITIKSQTVMLKYTAKDNEDYVLNLIDTPGHVDFSYEVSRSLAACEGSLLIVDATQGLEAQTLANVYKAIDNDHAIIPVINKIDLDSAEPERVRAQIRDVIGISTENAVEVSAKLGTGIADLLESIVKYIPPPEGDVSERLQALLIDSWYDIYLGVVILVRVKNGSIKSGMTIEMMSNGNKYCVEKVGIFTPEKRNVTELRAGEIGFLTASIKNARDCNVGDTITDAKNPCTEHLPGFKQLRPVVFCSLFPVSSDEFEKLRQSLEKLHLNDSSFTFESESSSALGHGFRCGFLGMLHLEVITQRLDEEFDLALVLTAPSVVYRIHMKDSSVLELYNPTEMPDPSKIDHIEEPWIKASVMLPGDYIGEVINLCNEKRGEQIDLVYVDNKAILTYGLPLSEIVFDFYDKLKSVSKGYASLDWEIHGYRSSELVKLSIVINGEEVDALSVMIYRPNAEKRGREICERLKELIPRQQYKIAIQAAIGGKVIARETVNPYRKDVTAKLYGGDRTRRMKLLEKQKKGKKRMHSIGKVNIPQSAFMEALKVKP.

Positions 2–184 constitute a tr-type G domain; the sequence is KNIRNFAIIA…SIVKYIPPPE (183 aa). GTP contacts are provided by residues 14-19 and 131-134; these read DHGKST and NKID.

Belongs to the TRAFAC class translation factor GTPase superfamily. Classic translation factor GTPase family. LepA subfamily.

The protein resides in the cell inner membrane. It catalyses the reaction GTP + H2O = GDP + phosphate + H(+). Required for accurate and efficient protein synthesis under certain stress conditions. May act as a fidelity factor of the translation reaction, by catalyzing a one-codon backward translocation of tRNAs on improperly translocated ribosomes. Back-translocation proceeds from a post-translocation (POST) complex to a pre-translocation (PRE) complex, thus giving elongation factor G a second chance to translocate the tRNAs correctly. Binds to ribosomes in a GTP-dependent manner. In Neorickettsia sennetsu (strain ATCC VR-367 / Miyayama) (Ehrlichia sennetsu), this protein is Elongation factor 4.